A 190-amino-acid chain; its full sequence is Superoxide dismutase [Cu-Zn] (190 aa).

An N-terminal signal peptide occupies residues 1 to 23 (MKLTNLALAFTLFGASAVAFAHA). Cu cation contacts are provided by His-83, His-85, and His-108. An intrachain disulfide couples Cys-90 to Cys-186. 4 residues coordinate Zn(2+): His-108, His-117, His-126, and Asp-129. Residues 162–181 (MIHEGGDNHSDHPAPLGGGG) are disordered. Residue His-164 participates in Cu cation binding.

The protein belongs to the Cu-Zn superoxide dismutase family. As to quaternary structure, homodimer. The cofactor is Cu cation. Zn(2+) serves as cofactor.

Its subcellular location is the periplasm. It carries out the reaction 2 superoxide + 2 H(+) = H2O2 + O2. Destroys radicals which are normally produced within the cells and which are toxic to biological systems. This chain is Superoxide dismutase [Cu-Zn] (sodC), found in Actinobacillus pleuropneumoniae (Haemophilus pleuropneumoniae).